The following is a 396-amino-acid chain: Elongation factor Tu 2 (396 aa).

Positions 10-206 (KPHINVGTIG…VLDSYIPEPQ (197 aa)) constitute a tr-type G domain. Residues 19 to 26 (GHVDHGKT) are G1. 19 to 26 (GHVDHGKT) contributes to the GTP binding site. T26 is a Mg(2+) binding site. The G2 stretch occupies residues 60 to 64 (GITIN). The segment at 81–84 (DCPG) is G3. GTP contacts are provided by residues 81 to 85 (DCPGH) and 136 to 139 (NKAD). Residues 136-139 (NKAD) form a G4 region. The tract at residues 174 to 176 (SAL) is G5.

Belongs to the TRAFAC class translation factor GTPase superfamily. Classic translation factor GTPase family. EF-Tu/EF-1A subfamily. Monomer.

It is found in the cytoplasm. It catalyses the reaction GTP + H2O = GDP + phosphate + H(+). GTP hydrolase that promotes the GTP-dependent binding of aminoacyl-tRNA to the A-site of ribosomes during protein biosynthesis. The chain is Elongation factor Tu 2 from Nitrosomonas eutropha (strain DSM 101675 / C91 / Nm57).